Here is a 383-residue protein sequence, read N- to C-terminus: Adaptive-response sensory kinase SasA (383 aa).

Residues 152 to 365 (MVAHELRTPL…CFTFNVPIWQ (214 aa)) enclose the Histidine kinase domain. His-155 carries the phosphohistidine; by autocatalysis modification.

Homooligomerizes. Interacts with KaiC. Participates in the KaiABC clock complex, whose core is composed of a KaiC homohexamer, 6 KaiB and up to 6 KaiA dimers. SasA and KaiB(fs) compete to bind to KaiC.

It catalyses the reaction ATP + protein L-histidine = ADP + protein N-phospho-L-histidine.. Functionally, member of the two-component regulatory system SasA/RpaA involved in genome-wide circadian gene expression. One of several clock output pathways. Participates in the Kai clock protein complex, the main circadian regulator in cyanobacteria, via its interaction with KaiC. KaiC enhances the autophosphorylation activity of SasA, which then transfers its phosphate group to RpaA to activate it. In addition to its output function, recruits fold-shifted KaiB (KaiB(fs)) to KaiC to cooperatively form the KaiB(6):KaiC(6) complex (independent of SasA kinase activity). Required for robustness of the circadian rhythm of gene expression and is involved in clock output, also required for adaptation to light/dark cycles. The polypeptide is Adaptive-response sensory kinase SasA (Synechococcus sp. (strain CC9311)).